Reading from the N-terminus, the 872-residue chain is Alanine--tRNA ligase (872 aa).

Positions 567, 571, 669, and 673 each coordinate Zn(2+).

This sequence belongs to the class-II aminoacyl-tRNA synthetase family. Zn(2+) serves as cofactor.

The protein localises to the cytoplasm. It catalyses the reaction tRNA(Ala) + L-alanine + ATP = L-alanyl-tRNA(Ala) + AMP + diphosphate. Functionally, catalyzes the attachment of alanine to tRNA(Ala) in a two-step reaction: alanine is first activated by ATP to form Ala-AMP and then transferred to the acceptor end of tRNA(Ala). Also edits incorrectly charged Ser-tRNA(Ala) and Gly-tRNA(Ala) via its editing domain. This chain is Alanine--tRNA ligase, found in Streptococcus agalactiae serotype III (strain NEM316).